The primary structure comprises 341 residues: Very-long-chain 3-oxoacyl-CoA reductase (341 aa).

The chain crosses the membrane as a helical span at residues 17–37; the sequence is ALYGALLLGVYKLTTFALSLV. NADP(+) is bound by residues Val63, Asp117, Asn144, Tyr218, Lys222, Val251, and Ser253. Residue Tyr218 is the Proton donor of the active site. Residue Lys222 is the Lowers pKa of active site Tyr of the active site.

It belongs to the short-chain dehydrogenases/reductases (SDR) family.

Its subcellular location is the endoplasmic reticulum membrane. It catalyses the reaction a very-long-chain (3R)-3-hydroxyacyl-CoA + NADP(+) = a very-long-chain 3-oxoacyl-CoA + NADPH + H(+). The protein operates within lipid metabolism; fatty acid biosynthesis. In terms of biological role, component of the microsomal membrane bound fatty acid elongation system, which produces the 26-carbon very long-chain fatty acids (VLCFA) from palmitate. Catalyzes the reduction of the 3-ketoacyl-CoA intermediate that is formed in each cycle of fatty acid elongation. VLCFAs serve as precursors for ceramide and sphingolipids. The polypeptide is Very-long-chain 3-oxoacyl-CoA reductase (Meyerozyma guilliermondii (strain ATCC 6260 / CBS 566 / DSM 6381 / JCM 1539 / NBRC 10279 / NRRL Y-324) (Yeast)).